The following is a 549-amino-acid chain: DNA 3'-5' helicase XPB (549 aa).

The segment at 1-130 is required for protein stability or solubility; it reads MTDGPLIVQS…RNKKIAPMLG (130 aa). One can recognise a Helicase ATP-binding domain in the interval 190-344; sequence ADSFWAGGSG…DVFSLIGPKR (155 aa). An ATP-binding site is contributed by 203–210; the sequence is LPCGAGKT. A DEAH box motif is present at residues 298 to 301; it reads DEVH. The Helicase C-terminal domain occupies 399-545; the sequence is VVKSILAKHP…YIIRDADDLL (147 aa).

The protein belongs to the helicase family. RAD25/XPB subfamily. In terms of assembly, monomer. The cofactor is Mn(2+). It depends on Mg(2+) as a cofactor.

It catalyses the reaction Couples ATP hydrolysis with the unwinding of duplex DNA by translocating in the 3'-5' direction.. It carries out the reaction ATP + H2O = ADP + phosphate + H(+). Functionally, ATP-dependent 3'-5' DNA helicase, unwinds 3'-overhangs, 3'- flaps, and splayed-arm DNA substrates but not 5'-overhangs, 5'-flap substrates, 3-way junctions or Holliday junctions. Not highly efficient in vitro. Requires ATP hydrolysis for helicase activity; the ATPase activity is DNA-dependent and requires a minimum of 4 single-stranded nucleotides (nt) with 6-10 nt providing all necessary interactions for full processive unwinding. The ATPase prefers ATP over CTP or GTP, is almost inactive with TTP. DNA helicase activity requires ATP or dATP and only acts when the 3'-overhang is &gt;20 nt. Capable of unwinding a DNA:RNA hybrid if the 3'-overhang is DNA. Also catalyzes ATP-independent annealing of complementary DNA strands; annealing requires Mg(2+). In Mycobacterium tuberculosis (strain ATCC 25618 / H37Rv), this protein is DNA 3'-5' helicase XPB.